Reading from the N-terminus, the 2035-residue chain is Envoplakin (2035 aa).

Over residues 1 to 27 the composition is skewed to low complexity; sequence MFKGLSKGSQGKGSPKGSPAKGSPKGS. 2 disordered regions span residues 1–37 and 63–84; these read MFKG…AATQ and KLQQ…QETG. Positions 1–841 are globular 1; that stretch reads MFKGLSKGSQ…LEPALAVSAP (841 aa). The tract at residues 12–28 is 4 X 4 AA tandem repeats of K-G-S-P; that stretch reads KGSPKGSPAKGSPKGSP. Polar residues predominate over residues 71–84; the sequence is GEQNQALQHQQETG. Residues 229–330 form a Spectrin repeat; it reads YTHLQGCTKQ…LCICQESQLQ (102 aa). The segment at 400–419 is disordered; that stretch reads QEVAPLPQRRNPSKQPLHVD. An SH3 domain is found at 413-470; sequence KQPLHVDSICDWDSGEVQLLRGERYTLKDNADPYTWLVQGPGGETKSAPAACLCIPAP. Residues 842 to 1664 adopt a coiled-coil conformation; sequence KRLRVISLQE…EKERTLRDLH (823 aa). A central fibrous rod domain region spans residues 842 to 1674; that stretch reads KRLRVISLQE…TKVSREELNQ (833 aa). The stretch at 1186–1227 is one Plectin 1 repeat; it reads KQKPKVQLQERVSEIFQVLPETEQEIRRLRAQLQETGSKKSG. Ser1576 carries the post-translational modification Phosphoserine. Residues 1607–1631 show a composition bias toward basic and acidic residues; sequence KQQKARQLQEEGRLLSQKTESERQK. A disordered region spans residues 1607–1637; the sequence is KQQKARQLQEEGRLLSQKTESERQKAAQRSQ. A globular 2 region spans residues 1675-2035; the sequence is ETQTRETNLS…SPTLPRSCVR (361 aa). A Plectin 2 repeat occupies 1679-1714; sequence RETNLSTKICILEPETGNDMSPYEAYKRGVIDRGQY. Ser1800 is modified (phosphoserine). 5 Plectin repeats span residues 1819-1856, 1857-1894, 1895-1932, 1933-1970, and 1971-2008; these read FGLT…PITG, QKLL…NTST, QRLL…QESV, LPHL…EDLG, and QLLQ…PLSG. Ser2026 is subject to Phosphoserine.

Belongs to the plakin or cytolinker family. May form a homodimer or a heterodimer with PPL.

The protein localises to the cell junction. It is found in the desmosome. The protein resides in the cornified envelope. It localises to the cytoplasm. Its subcellular location is the cytoskeleton. In terms of biological role, component of the cornified envelope of keratinocytes. May link the cornified envelope to desmosomes and intermediate filaments. This chain is Envoplakin (Evpl), found in Mus musculus (Mouse).